The primary structure comprises 467 residues: ATP synthase subunit beta (467 aa).

Gly-154–Thr-161 is an ATP binding site.

Belongs to the ATPase alpha/beta chains family. F-type ATPases have 2 components, CF(1) - the catalytic core - and CF(0) - the membrane proton channel. CF(1) has five subunits: alpha(3), beta(3), gamma(1), delta(1), epsilon(1). CF(0) has three main subunits: a(1), b(2) and c(9-12). The alpha and beta chains form an alternating ring which encloses part of the gamma chain. CF(1) is attached to CF(0) by a central stalk formed by the gamma and epsilon chains, while a peripheral stalk is formed by the delta and b chains.

It localises to the cell inner membrane. The catalysed reaction is ATP + H2O + 4 H(+)(in) = ADP + phosphate + 5 H(+)(out). Produces ATP from ADP in the presence of a proton gradient across the membrane. The catalytic sites are hosted primarily by the beta subunits. The chain is ATP synthase subunit beta from Petrotoga mobilis (strain DSM 10674 / SJ95).